Reading from the N-terminus, the 350-residue chain is MARSPCCEKNGLKKGPWTSEEDQKLVDYIQKHGYGNWRTLPKNAGLQRCGKSCRLRWTNYLRPDIKRGRFSFEEEETIIQLHSFLGNKWSAIAARLPGRTDNEIKNFWNTHIRKKLLRMGIDPVTHSPRLDLLDISSILASSLYNSSSHHMNMSRLMMDTNRRHHQQHPLVNPEILKLATSLFSQNQNQNLVVDHDSRTQEKQTVYSQTGVNQYQTNQYFENTITQELQSSMPPFPNEARQFNNMDHHFNGFGEQNLVSTSTTSVQDCYNPSFNDYSSSNFVLDPSYSDQSFNFANSVLNTPSSSPSPTTLNSSYINSSSCSTEDEIESYCSNLMKFDIPDFLDVNGFII.

2 HTH myb-type domains span residues 9–65 (KNGL…RPDI) and 66–116 (KRGR…RKKL). 2 consecutive DNA-binding regions (H-T-H motif) follow at residues 37-61 (WRTLPKNAGLQRCGKSCRLRWTNYL) and 89-112 (WSAIAARLPGRTDNEIKNFWNTHI).

As to expression, expressed in rosette leaves, cauline leaves and flowers.

It is found in the nucleus. In terms of biological role, probable transcription factor that may function in osmotic stress and wounding signaling pathways. Contributes to basal resistance against the herbivore Pieris rapae (white cabbage butterfly) feeding. The chain is Transcription factor MYB102 from Arabidopsis thaliana (Mouse-ear cress).